The sequence spans 144 residues: Large ribosomal subunit protein uL15 (144 aa).

The segment at 1–54 (MRLNTLSPAEGSKKAGKRLGRGIGSGLGKTGGRGHKGQKSRSGGGVRRGFEGGQ) is disordered. Positions 21–31 (RGIGSGLGKTG) are enriched in gly residues.

It belongs to the universal ribosomal protein uL15 family. Part of the 50S ribosomal subunit.

Binds to the 23S rRNA. This Salmonella arizonae (strain ATCC BAA-731 / CDC346-86 / RSK2980) protein is Large ribosomal subunit protein uL15.